The chain runs to 781 residues: MHTWKMWAICTALAAHLPEEQALRQACLSCDATQSCNCSFMGLDFIPPGLTGKITVLNLAHNRIKVIRTHDLQKAVNLRTLLLQSNQISSIDEDSFGSQGKLELLDLSNNSLAHLSPVWFGPLFSLQHLRIQGNSYSDLGESSPFSSLRNLSSLHLGNPQFSIIRQGNFEGIVFLNTLRIDGDNLSQYEPGSLKSIRKINHMIISIRRIDVFSAVIRDLLHSAIWLDVRKLAFSVPEKIQLLRIMSSSFAKKISLKQCLFTDATVPEIVSILEGMPKLMEVEMKDCTLLGTGKWYKQIHANQSQSLRILTIENLSIEEFYLFTDLQSVLDLLSLFRKVTVENTKVFLVPCKLSQHLLSLEYLDLSANLLGDQSLEHSACQGAWPSLQTLNLSQNSLSDLKMTGKSLFHLRNLNLLDISENNFGEIPDMCEWPENLKYLNLSSTQIPKLTTCIPSTLEVLDVSANNLQDFGLQLPFLKELYLTKNHLKTLPEATDIPNLVAMSISRNKLNSFSKEEFESFKQMELLDASANNFICSCEFLSFIHHEAGIAQVLVGWPESYICDSPLTVRGAQVGSVQLSLMECHRSLLVSLICTLVFLFILILVVVGYKYHAVWYMRMTWAWLQAKRKPKRAPTKDICYDAFVSYSENDSNWVENIMVQQLEQACPPFRLCLHKRDFVPGKWIVDNIIDSIEKSHKTLFVLSEHFVQSEWCKYELDFSHFRLFDENNDVAILILLEPIQSQAIPKRFCKLRKIMNTKTYLEWPPDEEQQQMFWENLKAALKS.

A signal peptide spans 1-24 (MHTWKMWAICTALAAHLPEEQALR). Residues 25–585 (QACLSCDATQ…QLSLMECHRS (561 aa)) are Extracellular-facing. C30 and C36 are oxidised to a cystine. N37 carries an N-linked (GlcNAc...) asparagine glycan. LRR repeat units lie at residues 53-74 (KITV…DLQK), 77-98 (NLRT…SFGS), 101-122 (KLEL…WFGP), 125-146 (SLQH…SPFS), 150-171 (NLSS…NFEG), and 174-195 (FLNT…SLKS). The N-linked (GlcNAc...) asparagine glycan is linked to N109. Residues N150, N184, N301, and N313 are each glycosylated (N-linked (GlcNAc...) asparagine). The cysteines at positions 350 and 379 are disulfide-linked. 7 LRR repeats span residues 358–378 (SLEY…EHSA), 385–406 (SLQT…GKSL), 411–432 (NLNL…CEWP), 434–455 (NLKY…IPST), 456–474 (LEVL…LQLP), 475–496 (FLKE…TDIP), and 497–518 (NLVA…EFES). An N-linked (GlcNAc...) asparagine glycan is attached at N390. Cysteines 429 and 451 form a disulfide. N439 carries an N-linked (GlcNAc...) asparagine glycan. Residues 530-584 (NNFICSCEFLSFIHHEAGIAQVLVGWPESYICDSPLTVRGAQVGSVQLSLMECHR) enclose the LRRCT domain. Residues 586–606 (LLVSLICTLVFLFILILVVVG) traverse the membrane as a helical segment. Over 607-781 (YKYHAVWYMR…WENLKAALKS (175 aa)) the chain is Cytoplasmic. Positions 636–779 (ICYDAFVSYS…MFWENLKAAL (144 aa)) constitute a TIR domain.

The protein belongs to the Toll-like receptor family. Binds MYD88 (via TIR domain). N-glycosylated. As to expression, highly expressed in ovary. Also detected in brain, heart, lung, liver, spleen and kidney, and at low levels in gizzard, muscle, testis and proventriculus.

It localises to the membrane. Its function is as follows. Participates in the innate immune response to microbial agents. Acts via MYD88 and TRAF6, leading to NF-kappa-B activation, cytokine secretion and the inflammatory response. Mediates the response to mycoplasmal macrophage-activating lipopeptide-2kD (MALP-2). The protein is Toll-like receptor 2 type-2 (TLR2-2) of Gallus gallus (Chicken).